A 358-amino-acid chain; its full sequence is Membrane-bound lytic murein transglycosylase C (358 aa).

Residues 1–16 form the signal peptide; the sequence is MKKILALLVIAPLLIS. C17 is lipidated: N-palmitoyl cysteine. C17 carries the S-diacylglycerol cysteine lipid modification.

Belongs to the transglycosylase Slt family.

The protein localises to the cell outer membrane. It catalyses the reaction Exolytic cleavage of the (1-&gt;4)-beta-glycosidic linkage between N-acetylmuramic acid (MurNAc) and N-acetylglucosamine (GlcNAc) residues in peptidoglycan, from either the reducing or the non-reducing ends of the peptidoglycan chains, with concomitant formation of a 1,6-anhydrobond in the MurNAc residue.. Functionally, murein-degrading enzyme. May play a role in recycling of muropeptides during cell elongation and/or cell division. In Serratia proteamaculans (strain 568), this protein is Membrane-bound lytic murein transglycosylase C.